The primary structure comprises 167 residues: Transmembrane protein 229B (167 aa).

Residues 1–14 are Cytoplasmic-facing; that stretch reads MASAEPLTALSRWY. The helical transmembrane segment at 15–35 threads the bilayer; the sequence is LYAIHGYFCEVMFTAAWEFVV. The Extracellular segment spans residues 36-40; it reads NFNWK. The chain crosses the membrane as a helical span at residues 41–61; the sequence is FPGVTSVWALFIYGTSILIVE. Residues 62–73 lie on the Cytoplasmic side of the membrane; it reads RMYLRLRGRCPL. The helical transmembrane segment at 74 to 94 threads the bilayer; that stretch reads LLRCLIYTLWTYLWEFTTGFI. Topologically, residues 95–111 are extracellular; that stretch reads LRQFNACPWDYSQFDFD. Residues 112 to 132 form a helical membrane-spanning segment; sequence FMGLITLEYAVPWFCGALLVE. Over 133–167 the chain is Cytoplasmic; that stretch reads QFVIRNTLRLRFDKDAEPGEPSGALALANGHVKTD.

Belongs to the TMEM229 family.

The protein localises to the membrane. The protein is Transmembrane protein 229B (TMEM229B) of Bos taurus (Bovine).